Reading from the N-terminus, the 310-residue chain is Ceramide synthase LOH1 (310 aa).

A run of 6 helical transmembrane segments spans residues 16–36, 85–105, 131–151, 157–177, 216–236, and 260–280; these read SFPT…FPTI, CIYY…EPWF, FLYM…VFWE, FGVS…SYIC, FVLF…FWIL, and YMFN…WVLI. A TLC domain is found at 76 to 289; it reads RKFKESAWKC…IYRMLVKQVQ (214 aa). 2 positions are modified to phosphoserine: Ser-300 and Ser-302.

In terms of tissue distribution, expressed ubiquitously at high levels. Not observed in pollen.

It is found in the endoplasmic reticulum membrane. The enzyme catalyses (4R)-hydroxysphinganine + a fatty acyl-CoA = an N-acyl-(4R)-4-hydroxysphinganine + CoA + H(+). It carries out the reaction hexacosanoyl-CoA + (4R)-hydroxysphinganine = N-hexacosanoyl-(4R)-hydroxysphinganine + CoA + H(+). The catalysed reaction is tetracosanoyl-CoA + (4R)-hydroxysphinganine = N-tetracosanoyl-(4R)-hydroxysphinganine + CoA + H(+). Its pathway is sphingolipid metabolism. With respect to regulation, inhibited by the mycotoxin fumonisin B(1), a sphingosine analog mycotoxins produced by pathogenic fungi. Repressed by divalent cation such as magnesium Mg(2+), copper Cu(2+), zinc Zn(2+), manganese Mn(2+), calcium Ca(2+) and cobalt Co(2+). In terms of biological role, essential for plant growth, promotes cell division in root meristems. Catalyzes the biosynthesis of ceramide sphingolipids with C(16) to C(28) fatty acids, structural membrane lipids involved in membrane trafficking (e.g. early endosomes) and cell polarity (e.g. polar auxin transport related proteins); mostly active with t18:0 and saturated very long saturated fatty acids (C24:0 and C26:0), such as long-chain base (LCB) phytosphingosine (t18:0), lignoceroyl- and hexacosanoyl-CoAs. Mediates resistance to sphinganine-analog mycotoxins (SAMs, e.g. fumonisin B(1)) by restoring the sphingolipid biosynthesis. Could salvage the transport of GPI-anchored proteins from the endoplasmic reticulum to the Golgi apparatus in ceramides-depleted cells after SAM exposure. May prevent precocious cell death by delaying PR1 accumulation during aging. Contributes to hypoxic conditions tolerance (e.g. submergences), especially in the dark, by promoting the formation of very-long-chain (VLC) ceramide species (22:1, 24:1 and 26:1) and of VLC unsaturated ceramides, which are modulating CTR1-mediated ethylene signaling leading to endoplasmic reticulum (ER)-to-nucleus translocation of EIN2 and EIN3. This is Ceramide synthase LOH1 from Arabidopsis thaliana (Mouse-ear cress).